The chain runs to 554 residues: Glucose-6-phosphate isomerase (554 aa).

Catalysis depends on E359, which acts as the Proton donor. Active-site residues include H390 and K518.

The protein belongs to the GPI family.

Its subcellular location is the cytoplasm. The enzyme catalyses alpha-D-glucose 6-phosphate = beta-D-fructose 6-phosphate. Its pathway is carbohydrate biosynthesis; gluconeogenesis. It functions in the pathway carbohydrate degradation; glycolysis; D-glyceraldehyde 3-phosphate and glycerone phosphate from D-glucose: step 2/4. Functionally, catalyzes the reversible isomerization of glucose-6-phosphate to fructose-6-phosphate. The sequence is that of Glucose-6-phosphate isomerase from Pseudomonas fluorescens.